A 376-amino-acid chain; its full sequence is Putative C-mannosyltransferase DPY19L2P2 (376 aa).

A glycan (N-linked (GlcNAc...) asparagine) is linked at N32. A run of 6 helical transmembrane segments spans residues 52-72 (ACFY…LFFI), 107-127 (LRES…TLIL), 154-174 (AQFI…VGYI), 182-202 (IIYM…GNSM), 233-253 (LNCW…LKFL), and 299-319 (LLIY…CFIF).

This sequence belongs to the dpy-19 family. As to expression, fibroblast, lung, lymphoblast, spleen and testis.

It is found in the membrane. Functionally, probable C-mannosyltransferase that mediates C-mannosylation of tryptophan residues on target proteins. The protein is Putative C-mannosyltransferase DPY19L2P2 (DPY19L2P2) of Homo sapiens (Human).